Here is a 504-residue protein sequence, read N- to C-terminus: 26S proteasome non-ATPase regulatory subunit 3 (504 aa).

The 180-residue stretch at Ala-254–Ser-433 folds into the PCI domain.

Belongs to the proteasome subunit S3 family. As to quaternary structure, the 26S proteasome is composed of a core protease, known as the 20S proteasome, capped at one or both ends by the 19S regulatory complex (RC). The RC is composed of at least 18 different subunits in two subcomplexes, the base and the lid, which form the portions proximal and distal to the 20S proteolytic core, respectively.

In terms of biological role, acts as a regulatory subunit of the 26 proteasome which is involved in the ATP-dependent degradation of ubiquitinated proteins. This is 26S proteasome non-ATPase regulatory subunit 3 (rpn-3) from Caenorhabditis elegans.